Here is a 218-residue protein sequence, read N- to C-terminus: Glycerol-3-phosphate acyltransferase (218 aa).

The next 5 membrane-spanning stretches (helical) occupy residues 4-24 (IALG…AILI), 54-74 (TAAI…WLAY), 80-100 (PFYL…PIFF), 107-127 (GVAT…GLMM), and 130-150 (WLLT…SALI).

It belongs to the PlsY family. As to quaternary structure, probably interacts with PlsX.

It localises to the cell inner membrane. The enzyme catalyses an acyl phosphate + sn-glycerol 3-phosphate = a 1-acyl-sn-glycero-3-phosphate + phosphate. It participates in lipid metabolism; phospholipid metabolism. Its function is as follows. Catalyzes the transfer of an acyl group from acyl-phosphate (acyl-PO(4)) to glycerol-3-phosphate (G3P) to form lysophosphatidic acid (LPA). This enzyme utilizes acyl-phosphate as fatty acyl donor, but not acyl-CoA or acyl-ACP. This is Glycerol-3-phosphate acyltransferase from Photorhabdus laumondii subsp. laumondii (strain DSM 15139 / CIP 105565 / TT01) (Photorhabdus luminescens subsp. laumondii).